The primary structure comprises 694 residues: Ubiquitin-like modifier-activating enzyme ATG7 (694 aa).

The GXGXXG motif motif lies at 370-375 (GAGTLG). The active-site Glycyl thioester intermediate is the Cys550. The homodimerization stretch occupies residues 650-689 (ALQEKEYVAELSGLAEVQRRAEEMAAHVDWEEDDDLVDDG).

This sequence belongs to the ATG7 family. As to quaternary structure, homodimer. Interacts with ATG8 through a thioester bond between Cys-550 and the C-terminal 'Gly-116' of ATG8 and with ATG12 through a thioester bond between Cys-550 and the C-terminal 'Gly-160' of ATG12. Also interacts with ATG3.

It is found in the cytoplasm. It localises to the preautophagosomal structure. Its function is as follows. E1-like activating enzyme involved in the 2 ubiquitin-like systems required for cytoplasm to vacuole transport (Cvt) and autophagy. Activates ATG12 for its conjugation with ATG5 and ATG8 for its conjugation with phosphatidylethanolamine. Both systems are needed for the ATG8 association to Cvt vesicles and autophagosomes membranes. Autophagy is essential for maintenance of amino acid levels and protein synthesis under nitrogen starvation. Required for selective autophagic degradation of the nucleus (nucleophagy) as well as for mitophagy which contributes to regulate mitochondrial quantity and quality by eliminating the mitochondria to a basal level to fulfill cellular energy requirements and preventing excess ROS production. Autophagy is required for proper vegetative growth, asexual/sexual reproduction, and full virulence. Autophagy is particularly involved in the biosynthesis of deoxynivalenol (DON), an important virulence determinant. This chain is Ubiquitin-like modifier-activating enzyme ATG7, found in Gibberella zeae (strain ATCC MYA-4620 / CBS 123657 / FGSC 9075 / NRRL 31084 / PH-1) (Wheat head blight fungus).